The following is a 1207-amino-acid chain: Systemin receptor SR160 (1207 aa).

Positions 1–34 (MKAHKTVFNQHPLSLNKLFFVLLLIFFLPPASPA) are cleaved as a signal peptide. Positions 71 to 78 (CSFTGVSC) match the Cys pair 1 motif. 20 LRR repeats span residues 109-131 (NLES…AKSQ), 135-157 (TLDS…SSFG), 161-181 (NLKS…EMLK), 186-207 (SLQV…PWVS), 213-234 (ELEF…LDFK), 235-257 (NLSY…KDCS), 258-280 (NLQH…LSSC), 282-304 (KLSF…PSES), 305-325 (LQYL…QLAD), 329-350 (TVVE…SLGE), 353-375 (SLEL…TLLK), 378-401 (NIKT…SNLP), 402-423 (KLET…GICK), 428-450 (NLKV…LSNC), 452-474 (QLVS…LGSL), 476-499 (KLKD…MYLQ), 500-523 (ALEN…SNCT), 524-547 (KLNW…GRLS), 548-570 (NLAI…LGNC), and 572-594 (SLIW…LFKQ). N-linked (GlcNAc...) asparagine glycosylation occurs at Asn-119. Asn-166 and Asn-196 each carry an N-linked (GlcNAc...) asparagine glycan. Residues Asn-235 and Asn-245 are each glycosylated (N-linked (GlcNAc...) asparagine). Asn-287 carries N-linked (GlcNAc...) asparagine glycosylation. N-linked (GlcNAc...) asparagine glycosylation is found at Asn-339 and Asn-363. Asn-412 and Asn-449 each carry an N-linked (GlcNAc...) asparagine glycan. A glycan (N-linked (GlcNAc...) asparagine) is linked at Asn-521. Asn-556, Asn-584, Asn-646, and Asn-662 each carry an N-linked (GlcNAc...) asparagine glycan. 4 LRR repeats span residues 664–686 (SMIF…LGAM), 688–711 (YLSI…GGLK), 712–735 (NVAI…TSLT), and 736–758 (LLGE…APFD). N-linked (GlcNAc...) asparagine glycosylation is found at Asn-724, Asn-746, and Asn-767. A Cys pair 2 motif is present at residues 771-779 (CGYPLPLPC). A helical transmembrane segment spans residues 803–823 (SVAMGLLFSLFCIFGLIIVAI). The Protein kinase domain occupies 888–1163 (FHNDSLVGSG…IQVMAMFKEI (276 aa)). ATP is bound by residues 894–902 (VGSGGFGDV) and Lys-916. Residue Asp-1014 is the Proton acceptor of the active site.

Belongs to the protein kinase superfamily. Ser/Thr protein kinase family. In terms of processing, glycosylated.

It localises to the cell membrane. It catalyses the reaction L-seryl-[protein] + ATP = O-phospho-L-seryl-[protein] + ADP + H(+). The catalysed reaction is L-threonyl-[protein] + ATP = O-phospho-L-threonyl-[protein] + ADP + H(+). Receptor with a serine/threonine-protein kinase activity. Involved in the perception of systemin, a peptide hormone responsible for the systemic activation of defense genes in leaves of wounded plants. May also regulate, in response to brassinosteroid binding, a signaling cascade involved in plant development. This chain is Systemin receptor SR160, found in Solanum peruvianum (Peruvian tomato).